Reading from the N-terminus, the 351-residue chain is MTIAIGQNQERGLFDLVDDWLKRDRFVFVGWSGILLFPTAYLAAGGWFTGTTFVTSWYTHGLASSYLEGCNFLTAAVSTPANSMGHSLLLLWGPEAQGDFTRWCQIGGLWAFIALHGAFGLIGFCLRQFEIARLVGIRPYNAIAFSGPIAVFVSVFLLYPLGQASWFFAPSFGVAAIFRFLLFLQGFHNWTLNPFHMMGVAGILGGALLCAIHGATVENTLFEDGDAANTFRAFTPTQSEETYSMVTANRFWSQIFGVAFSNKRWLHFFMLFVPVAGLWTSSIGIVGLALNLRAYDFVSQELRAAEDPEFETFYTKNILLNEGIRSWMAAQDQPHENFVFPEEVLPRGNAL.

The helical transmembrane segment at 39 to 59 threads the bilayer; the sequence is TAYLAAGGWFTGTTFVTSWYT. His-116 lines the chlorophyll a pocket. A helical transmembrane segment spans residues 123 to 139; that stretch reads GFCLRQFEIARLVGIRP. Residues Gln-128 and Asn-141 each coordinate pheophytin a. Residues 151–164 traverse the membrane as a helical segment; the sequence is VFVSVFLLYPLGQA. His-196 contributes to the chlorophyll a binding site. Residues 206 to 226 traverse the membrane as a helical segment; the sequence is GALLCAIHGATVENTLFEDGD. A plastoquinone-binding residues include His-213 and Phe-260. Fe cation is bound at residue His-213. His-267 is a binding site for Fe cation. A helical transmembrane segment spans residues 277–293; the sequence is GLWTSSIGIVGLALNLR.

The protein belongs to the reaction center PufL/M/PsbA/D family. As to quaternary structure, PSII is composed of 1 copy each of membrane proteins PsbA, PsbB, PsbC, PsbD, PsbE, PsbF, PsbH, PsbI, PsbJ, PsbK, PsbL, PsbM, PsbT, PsbX, PsbY, PsbZ, Psb30/Ycf12, at least 3 peripheral proteins of the oxygen-evolving complex and a large number of cofactors. It forms dimeric complexes. The D1/D2 heterodimer binds P680, chlorophylls that are the primary electron donor of PSII, and subsequent electron acceptors. It shares a non-heme iron and each subunit binds pheophytin, quinone, additional chlorophylls, carotenoids and lipids. There is also a Cl(-1) ion associated with D1 and D2, which is required for oxygen evolution. The PSII complex binds additional chlorophylls, carotenoids and specific lipids. is required as a cofactor.

It localises to the plastid. Its subcellular location is the chloroplast thylakoid membrane. It catalyses the reaction 2 a plastoquinone + 4 hnu + 2 H2O = 2 a plastoquinol + O2. In terms of biological role, photosystem II (PSII) is a light-driven water:plastoquinone oxidoreductase that uses light energy to abstract electrons from H(2)O, generating O(2) and a proton gradient subsequently used for ATP formation. It consists of a core antenna complex that captures photons, and an electron transfer chain that converts photonic excitation into a charge separation. The D1/D2 (PsbA/PsbD) reaction center heterodimer binds P680, the primary electron donor of PSII as well as several subsequent electron acceptors. D2 is needed for assembly of a stable PSII complex. This Thalassiosira pseudonana (Marine diatom) protein is Photosystem II D2 protein.